Reading from the N-terminus, the 289-residue chain is Protease HtpX (289 aa).

The next 2 membrane-spanning stretches (helical) occupy residues 6–26 (ILFL…LNII) and 38–58 (TGIL…SLFM). Residue His144 participates in Zn(2+) binding. Glu145 is an active-site residue. His148 contacts Zn(2+). Transmembrane regions (helical) follow at residues 152–172 (GDMV…IFLS) and 194–214 (LVFW…ATMI). Zn(2+) is bound at residue Glu223.

Belongs to the peptidase M48B family. Requires Zn(2+) as cofactor.

The protein localises to the cell inner membrane. This Haemophilus ducreyi (strain 35000HP / ATCC 700724) protein is Protease HtpX.